A 156-amino-acid polypeptide reads, in one-letter code: Holliday junction resolvase (156 aa).

This sequence belongs to the RuvC family. Poxviruses-type subfamily. Mg(2+) serves as cofactor.

Nuclease that specifically cleaves and resolves four-way DNA Holliday junctions into linear duplex products. This is Holliday junction resolvase from Vertebrata (FPV).